A 323-amino-acid chain; its full sequence is RNA polymerase II holoenzyme cyclin-like subunit (323 aa).

The region spanning 45–176 (DSKQNGIEQS…LLEELESYLI (132 aa)) is the Cyclin N-terminal domain.

This sequence belongs to the cyclin family. Cyclin C subfamily. Component of the SRB8-11 complex which consists of SRB8, SSN2/SRB9, SSN3/SRB10 and SSN8/SRB11. The SRB8-11 complex associates with the Mediator complex. The SSN3/SRB10 and SSN8/SRB11 kinase-cyclin pair also associate with the RNA polymerase II holoenzyme. Interacts with ASK10.

The protein resides in the nucleus. Component of the SRB8-11 complex. The SRB8-11 complex is a regulatory module of the Mediator complex which is itself involved in regulation of basal and activated RNA polymerase II-dependent transcription. The SRB8-11 complex may be involved in the transcriptional repression of a subset of genes regulated by Mediator. It may inhibit the association of the Mediator complex with RNA polymerase II to form the holoenzyme complex. The SRB8-11 complex phosphorylates the C-terminal domain (CTD) of the largest subunit of RNA polymerase II RPB1 at serines 2 and 5. The SSN3/SRB10 and SSN8/SRB11 kinase-cyclin pair may also positively and negatively regulate numerous transcriptional activators in response to changes in nutritional and physiological conditions. The polypeptide is RNA polymerase II holoenzyme cyclin-like subunit (SSN8) (Saccharomyces cerevisiae (strain ATCC 204508 / S288c) (Baker's yeast)).